Consider the following 431-residue polypeptide: Synaptotagmin-11 (431 aa).

Residues 1 to 15 (MAEITNIRPSFDVSP) lie on the Vesicular side of the membrane. Residues 16–36 (VVAGLIGASVLVVCVSVTVFV) form a helical membrane-spanning segment. Topologically, residues 37–431 (WSCCHQQAEK…VAKWHSLSEY (395 aa)) are cytoplasmic. At serine 134 the chain carries Phosphoserine. The segment at 134–154 (SPITSLTPGESKTTSPSSPEE) is disordered. Residues 140–151 (TPGESKTTSPSS) are compositionally biased toward low complexity. C2 domains follow at residues 157-279 (MLGS…QLTR) and 291-426 (SRGE…AKWH). 3 residues coordinate Ca(2+): aspartate 250, serine 253, and aspartate 256.

It belongs to the synaptotagmin family. As to quaternary structure, homodimer. Can also form heterodimers. Interacts with PRKN. Interacts (via C2 2 domain) with AGO2 and SND1; the interaction with SND1 is direct. Interacts with KIF1A; the interaction increases in presence of calcium. The cofactor is Ca(2+). Ubiquitinated, at least by PRKN, and targeted to the proteasome complex for degradation. Ubiquitination is inhibited by ATP13A2.

Its subcellular location is the cytoplasmic vesicle membrane. It is found in the perikaryon. The protein resides in the golgi apparatus. The protein localises to the trans-Golgi network membrane. It localises to the recycling endosome membrane. Its subcellular location is the lysosome membrane. It is found in the cytoplasmic vesicle. The protein resides in the phagosome. The protein localises to the cell projection. It localises to the axon. Its subcellular location is the dendrite. It is found in the postsynaptic density. The protein resides in the clathrin-coated vesicle membrane. In terms of biological role, synaptotagmin family member involved in vesicular and membrane trafficking which does not bind Ca(2+). Inhibits clathrin-mediated and bulk endocytosis, functions to ensure precision in vesicle retrieval. Plays an important role in dopamine transmission by regulating endocytosis and the vesicle-recycling process. Essential component of a neuronal vesicular trafficking pathway that differs from the synaptic vesicle trafficking pathway but is crucial for development and synaptic plasticity. In macrophages and microglia, inhibits the conventional cytokine secretion, of at least IL6 and TNF, and phagocytosis. In astrocytes, regulates lysosome exocytosis, mechanism required for the repair of injured astrocyte cell membrane. Required for the ATP13A2-mediated regulation of the autophagy-lysosome pathway. This chain is Synaptotagmin-11, found in Homo sapiens (Human).